The primary structure comprises 290 residues: MTNSYLAFPKFDPVIFSIGPVSLHWYGLMYLVGFVFAMWLAVRRANKPGSGWTKDEVENLLYAGFLGVFVGGRVGYVLFYNLPLFMENPLYLFKVWDGGMSFHGGLMGVILVMFWFARRTKRTFFQVSDFIAPLIPFGLGAGRLGNFINGELWGRVTTDTPWAMLFPSSRAEDVALAAADPKLLPILNQYGVLPRHPSQLYELLLEGVVLFIILNLFIRKPRPMGAVSGLFLIGYGAFRIIVEAFRQPDAQLGLFDGVISMGQILSVPMVVAGIIMMIWAYRRRPQQQLS.

Transmembrane regions (helical) follow at residues 21 to 41, 60 to 80, 96 to 116, 130 to 150, 198 to 218, 225 to 245, and 258 to 278; these read VSLH…MWLA, LLYA…VLFY, WDGG…MFWF, FIAP…FING, SQLY…NLFI, GAVS…VEAF, and VISM…IMMI. Arginine 143 is an a 1,2-diacyl-sn-glycero-3-phospho-(1'-sn-glycerol) binding site.

It belongs to the Lgt family.

The protein resides in the cell inner membrane. The enzyme catalyses L-cysteinyl-[prolipoprotein] + a 1,2-diacyl-sn-glycero-3-phospho-(1'-sn-glycerol) = an S-1,2-diacyl-sn-glyceryl-L-cysteinyl-[prolipoprotein] + sn-glycerol 1-phosphate + H(+). Its pathway is protein modification; lipoprotein biosynthesis (diacylglyceryl transfer). Its function is as follows. Catalyzes the transfer of the diacylglyceryl group from phosphatidylglycerol to the sulfhydryl group of the N-terminal cysteine of a prolipoprotein, the first step in the formation of mature lipoproteins. The sequence is that of Phosphatidylglycerol--prolipoprotein diacylglyceryl transferase from Serratia proteamaculans (strain 568).